A 76-amino-acid polypeptide reads, in one-letter code: RNA-binding protein KhpA (76 aa).

Residues 29 to 76 (QNIIELRVSPKDVGKVIGKNGRIAKSLRAILTAASVKAGKNFSLEIID) enclose the KH domain.

It belongs to the KhpA RNA-binding protein family. As to quaternary structure, forms a complex with KhpB.

It is found in the cytoplasm. In terms of biological role, a probable RNA chaperone. Forms a complex with KhpB which binds to cellular RNA and controls its expression. Plays a role in peptidoglycan (PG) homeostasis and cell length regulation. The polypeptide is RNA-binding protein KhpA (Leptospira interrogans serogroup Icterohaemorrhagiae serovar copenhageni (strain Fiocruz L1-130)).